The following is a 164-amino-acid chain: UPF0304 protein MS2240 (164 aa).

Belongs to the UPF0304 family.

The polypeptide is UPF0304 protein MS2240 (Mannheimia succiniciproducens (strain KCTC 0769BP / MBEL55E)).